Reading from the N-terminus, the 308-residue chain is MARTDDDSWDLATGVGATATLVAAGRARAARAAQPLIDDPFAEPLVRAVGVEFLTRWATGELDAADVDDPDAAWGLQRMTTELVVRTRYFDQFFLDAAAAGVRQAVILASGLDARGYRLPWPADTTVFEVDQPRVLEFKAQTLAGLGAQPTADLRMVPADLRHDWPDALRRGGFDAAEPAAWIAEGLFGYLPPDAQNRLLDHVTDLSAPGSRLALEAFLGSADRDSARVEEMIRTATRGWREHGFHLDIWALNYAGPRHEVSGYLDNHGWRSVGTTTAQLLAAHDLPAAPALPAGLADRPNYWTCVLG.

S-adenosyl-L-methionine is bound by residues Asp-131 and 160 to 161 (DL).

Belongs to the UPF0677 family.

Exhibits S-adenosyl-L-methionine-dependent methyltransferase activity. The sequence is that of Putative S-adenosyl-L-methionine-dependent methyltransferase Mb3816c from Mycobacterium bovis (strain ATCC BAA-935 / AF2122/97).